The sequence spans 351 residues: Outer membrane protein A (351 aa).

A signal peptide spans 1-21; that stretch reads MKKTAIAITVALAGFATVAQA. The next 8 beta stranded transmembrane spans lie at 27–37, 55–66, 70–78, 96–107, 112–120, 147–156, 161–168, and 187–195; these read TWYTGAKLGWS, QLGAGAFGGYQV, VGFEMGYDW, QGVQLTAKLGYP, LDVYTRLGG, PVFAGGVEWA, IATRLEYQ, and LLSLGVSYR. 4 consecutive repeat copies span residues 206 to 207, 208 to 209, 210 to 211, and 212 to 213. Residues 206 to 213 are 4 X 2 AA tandem repeats of A-P; that stretch reads APAPAPAP. An OmpA-like domain is found at 215 to 343; it reads VQTKHFTLKS…RVEIEVKGIK (129 aa). Cysteines 316 and 328 form a disulfide.

Belongs to the outer membrane OOP (TC 1.B.6) superfamily. OmpA family. In terms of assembly, monomer and homodimer.

It is found in the cell outer membrane. Its function is as follows. With TolR probably plays a role in maintaining the position of the peptidoglycan cell wall in the periplasm. Acts as a porin with low permeability that allows slow penetration of small solutes; an internal gate slows down solute passage. Required for conjugation with F-type plasmids; probably serves as the mating receptor on recipient cells. The chain is Outer membrane protein A from Shigella dysenteriae.